A 622-amino-acid chain; its full sequence is Sodium/potassium/calcium exchanger 4 (622 aa).

The N-terminal stretch at 1 to 38 is a signal peptide; the sequence is MALRGLIRQSKVRRRREMLPQQVGFVCAVLALVCCASG. Residues 39 to 97 are Extracellular-facing; that stretch reads LFGSLGHKTASAGKHVLLDTWRNRKLMAPINGTPLAKNCTDPAIHEFPTDLFSNKERQH. An N-linked (GlcNAc...) asparagine glycan is attached at Asn-76. Residues 98-118 traverse the membrane as a helical segment; the sequence is GAVLLHILGALYMFYALAIVC. The Cytoplasmic segment spans residues 119–142; the sequence is DDFFVPSLEKICEKLHLSEDVAGA. Residues 139–179 form an Alpha-1 repeat; sequence VAGATFMAAGSSTPELFASVIGVFITHGDVGVGTIVGSAVF. Residues 143–163 traverse the membrane as a helical segment; sequence TFMAAGSSTPELFASVIGVFI. Residues 164 to 172 are Extracellular-facing; it reads THGDVGVGT. A helical membrane pass occupies residues 173–193; it reads IVGSAVFNILCIIGVCGLFAG. Residues 194-200 are Cytoplasmic-facing; sequence QVVRLTW. Residues 201 to 221 form a helical membrane-spanning segment; that stretch reads WAVCRDSVYYTLSVIVLIAFI. Topologically, residues 222-224 are extracellular; it reads YDE. The helical transmembrane segment at 225–245 threads the bilayer; that stretch reads EIVWWEGLVLIILYVFYILIM. Residues 246–457 are Cytoplasmic-facing; that stretch reads KYNMKMQTFF…RWEKFFMVTF (212 aa). The disordered stretch occupies residues 358-408; sequence ANGVNSKPLQNGRHENMENGNVPVENPEDPQQGQEQQPPPQPPPPEPESVE. Residues 394-404 show a composition bias toward pro residues; that stretch reads QPPPQPPPPEP. A helical transmembrane segment spans residues 458-478; that stretch reads ITATLWIAVFSYLMVWLVTII. Gly-479 is a topological domain (extracellular). A helical transmembrane segment spans residues 480 to 500; that stretch reads YTLGIPDVIMGITFLAAGTSV. One copy of the Alpha-2 repeat lies at 495-526; the sequence is AAGTSVPDCMASLIVARQGLGDMAVSNTIGSN. Residues 501–526 are Cytoplasmic-facing; the sequence is PDCMASLIVARQGLGDMAVSNTIGSN. The helical transmembrane segment at 527–547 threads the bilayer; that stretch reads VFDILVGLGIPWGLQTMVINY. At 548–557 the chain is on the extracellular side; it reads GSTVKINSRG. Residues 558-578 traverse the membrane as a helical segment; the sequence is LVYSVVLLLGSVALTVLGIHL. Residues 579–586 are Cytoplasmic-facing; sequence NKWRLDRK. The chain crosses the membrane as a helical span at residues 587–607; it reads LGIYVLVLYAVFLCFSIMIEF. Topologically, residues 608 to 622 are extracellular; that stretch reads NVFTFVNLPMCREDD.

Belongs to the Ca(2+):cation antiporter (CaCA) (TC 2.A.19) family. SLC24A subfamily. In terms of tissue distribution, expressed in late secretory-stage and maturation-stage ameloblasts, with significantly increased expression during the late stages of amelogenesis (at protein level). Widely expressed in most regions of the brain, including hippocampus, neocortex, thalamus, striatum and olfactory bulb. Expressed in the olfactory sensory neurons.

It is found in the cell membrane. The protein localises to the cytoplasm. It carries out the reaction Ca(2+)(out) + K(+)(out) + 4 Na(+)(in) = Ca(2+)(in) + K(+)(in) + 4 Na(+)(out). In terms of biological role, calcium, potassium:sodium antiporter that transports 1 Ca(2+) and 1 K(+) in exchange for 4 Na(+). Controls the rapid response termination and proper regulation of adaptation in olfactory sensory neurons (OSNs) which subsequently influences how odor information is encoded and perceived. May play a role in calcium transport during amelogenesis. This Mus musculus (Mouse) protein is Sodium/potassium/calcium exchanger 4.